Reading from the N-terminus, the 657-residue chain is Acetyl-coenzyme A synthetase (657 aa).

CoA-binding positions include 192–195 (RRGK) and Thr-311. ATP contacts are provided by residues 387–389 (GEP), 411–416 (DTWWQT), Asp-504, Arg-519, and Arg-530. The Mg(2+) site is built by His-543 and Val-546. Arg-592 serves as a coordination point for CoA. Lys-617 is subject to N6-acetyllysine.

Belongs to the ATP-dependent AMP-binding enzyme family. Requires Mg(2+) as cofactor. Post-translationally, acetylated. Deacetylation by the SIR2-homolog deacetylase activates the enzyme.

It catalyses the reaction acetate + ATP + CoA = acetyl-CoA + AMP + diphosphate. In terms of biological role, catalyzes the conversion of acetate into acetyl-CoA (AcCoA), an essential intermediate at the junction of anabolic and catabolic pathways. AcsA undergoes a two-step reaction. In the first half reaction, AcsA combines acetate with ATP to form acetyl-adenylate (AcAMP) intermediate. In the second half reaction, it can then transfer the acetyl group from AcAMP to the sulfhydryl group of CoA, forming the product AcCoA. This chain is Acetyl-coenzyme A synthetase, found in Campylobacter jejuni subsp. jejuni serotype O:6 (strain 81116 / NCTC 11828).